The sequence spans 152 residues: UPF0266 membrane protein plu2700 (152 aa).

The next 3 helical transmembrane spans lie at 6-26, 45-65, and 67-87; these read IALT…EFVV, IDAL…ITVY, and SRLT…IAYI.

It belongs to the UPF0266 family.

It is found in the cell inner membrane. The sequence is that of UPF0266 membrane protein plu2700 from Photorhabdus laumondii subsp. laumondii (strain DSM 15139 / CIP 105565 / TT01) (Photorhabdus luminescens subsp. laumondii).